Here is a 538-residue protein sequence, read N- to C-terminus: Methionine--tRNA ligase (538 aa).

Positions 21–31 (YYVNDAPHLGH) match the 'HIGH' region motif. Zn(2+) is bound by residues Cys137, Cys140, Cys162, and His165. The short motif at 313–317 (KMSKS) is the 'KMSKS' region element. Lys316 is a binding site for ATP.

It belongs to the class-I aminoacyl-tRNA synthetase family. MetG type 2A subfamily. As to quaternary structure, monomer. Zn(2+) serves as cofactor.

It localises to the cytoplasm. The enzyme catalyses tRNA(Met) + L-methionine + ATP = L-methionyl-tRNA(Met) + AMP + diphosphate. In terms of biological role, is required not only for elongation of protein synthesis but also for the initiation of all mRNA translation through initiator tRNA(fMet) aminoacylation. The chain is Methionine--tRNA ligase from Streptomyces coelicolor (strain ATCC BAA-471 / A3(2) / M145).